Here is a 46-residue protein sequence, read N- to C-terminus: Transcriptional regulator SEHBP (46 aa).

As to quaternary structure, interacts with histone H2B. Also interacts with chromatin-binding proteins HMGN1 and HMGN3.

It is found in the nucleus. The protein resides in the cytoplasm. Functionally, plays a role in transcription regulation. The sequence is that of Transcriptional regulator SEHBP from Homo sapiens (Human).